The primary structure comprises 86 residues: Parvalbumin beta 3 (86 aa).

N-acetylalanine is present on alanine 1. One can recognise an EF-hand domain in the interval 35–70; the sequence is LSPEEVKKFFAIIDQDHSGFIEEEELKLFLQTFSAG. Residues aspartate 48, aspartate 50, serine 52, phenylalanine 54, glutamate 56, and glutamate 59 each contribute to the Ca(2+) site.

This sequence belongs to the parvalbumin family.

Functionally, in muscle, parvalbumin is thought to be involved in relaxation after contraction. It binds two calcium ions. The protein is Parvalbumin beta 3 of Merluccius hubbsi (Argentine hake).